Reading from the N-terminus, the 141-residue chain is Small ribosomal subunit protein uS12 (141 aa).

Belongs to the universal ribosomal protein uS12 family. Part of the 30S ribosomal subunit.

In terms of biological role, with S4 and S5 plays an important role in translational accuracy. Located at the interface of the 30S and 50S subunits. This Methanobrevibacter smithii (strain ATCC 35061 / DSM 861 / OCM 144 / PS) protein is Small ribosomal subunit protein uS12.